A 781-amino-acid polypeptide reads, in one-letter code: Mitochondrial inner membrane m-AAA protease component paraplegin (781 aa).

A mitochondrion-targeting transit peptide spans 1–43 (MAAALLLLRGLRPGPEPRPRRLWGLLSGRGPGLSSGAGARRPY). 2 disordered regions span residues 22–56 (LWGLLSGRGPGLSSGAGARRPYAARGTPVGPAAAG) and 103–135 (TSRMKQKNKDNDKPKGKTPEDDEEEKRRKERED). Residues 36–56 (GAGARRPYAARGTPVGPAAAG) are compositionally biased toward low complexity. The propeptide at 44-105 (AARGTPVGPA…GSTLYFNTSR (62 aa)) is removed in mature form. Topologically, residues 106 to 144 (MKQKNKDNDKPKGKTPEDDEEEKRRKEREDQMYRERLRT) are mitochondrial matrix. Positions 109 to 135 (KNKDNDKPKGKTPEDDEEEKRRKERED) are enriched in basic and acidic residues. A helical transmembrane segment spans residues 145–165 (LFIIALVMSLLNSLSTSGGSI). Residues 166–248 (SWADFVNEML…DRIPVSYKRT (83 aa)) are Mitochondrial intermembrane-facing. A helical transmembrane segment spans residues 249–269 (GFFGNALYALGMTAVGLAILW). Over 270–781 (YVFRLAGMTG…ASGEEEAPAP (512 aa)) the chain is Mitochondrial matrix. The ATP site is built by Ala-312, Gly-352, Cys-353, Gly-354, Lys-355, Thr-356, and Leu-357. 3'-nitrotyrosine is present on Tyr-505. Zn(2+) is bound at residue His-574. Glu-575 is a catalytic residue. Zn(2+)-binding residues include His-578 and Asp-650. The interaction with PPIF stretch occupies residues 701 to 781 (HEAKLLVAKA…ASGEEEAPAP (81 aa)).

This sequence in the N-terminal section; belongs to the AAA ATPase family. The protein in the C-terminal section; belongs to the peptidase M41 family. Forms heterohexamers with SPG7 and AFG3L1. The m-AAA protease is either composed of homohexamers of AFG3L2 or heterohexamers of AFG3L1, AFG3L2 and/or SPG7. Component of the mitochondrial permeability transition pore complex (mPTPC), at least composed of SPG7, VDAC1 and PPIF. Interacts with MAIP1. It depends on Zn(2+) as a cofactor. Post-translationally, upon import into the mitochondrion, the N-terminal transit peptide is cleaved by the mitochondrial-processing peptidase (MPP) to generate an intermediate form which undergoes a second proteolytic cleavage mediated by proteases AFG3L1 and/or AFG3L2 removing an additional N-terminal fragment to generate the proteolytically active mature form. Expressed in the brain and retina (at protein level).

It is found in the mitochondrion inner membrane. It catalyses the reaction ATP + H2O = ADP + phosphate + H(+). Its function is as follows. Catalytic component of the m-AAA protease, a protease that plays a key role in proteostasis of inner mitochondrial membrane proteins, and which is essential for axonal and neuron development. SPG7 possesses both ATPase and protease activities: the ATPase activity is required to unfold substrates, threading them into the internal proteolytic cavity for hydrolysis into small peptide fragments. The m-AAA protease exerts a dual role in the mitochondrial inner membrane: it mediates the processing of specific regulatory proteins and ensures protein quality control by degrading misfolded polypeptides. Mediates protein maturation of the mitochondrial ribosomal subunit MRPL32/bL32m by catalyzing the cleavage of the presequence of MRPL32/bL32m prior to assembly into the mitochondrial ribosome. Acts as a regulator of calcium in neurons by mediating degradation of SMDT1/EMRE before its assembly with the uniporter complex, limiting the availability of SMDT1/EMRE for MCU assembly and promoting efficient assembly of gatekeeper subunits with MCU. Also regulates mitochondrial calcium by catalyzing degradation of MCU. Plays a role in the formation and regulation of the mitochondrial permeability transition pore (mPTP) and its proteolytic activity is dispensable for this function. This Mus musculus (Mouse) protein is Mitochondrial inner membrane m-AAA protease component paraplegin.